The primary structure comprises 80 residues: UPF0180 protein GK1051 (80 aa).

It belongs to the UPF0180 family.

This chain is UPF0180 protein GK1051, found in Geobacillus kaustophilus (strain HTA426).